Consider the following 150-residue polypeptide: Heavy metal-associated isoprenylated plant protein 24 (150 aa).

The HMA domain maps to 26 to 89 (QTVALRVARI…AAKSTKKKVE (64 aa)). Residues C37 and C40 each contribute to the a metal cation site. C147 carries the post-translational modification Cysteine methyl ester. C147 carries S-farnesyl cysteine lipidation. Positions 148–150 (AIM) are cleaved as a propeptide — removed in mature form.

The protein belongs to the HIPP family. In terms of assembly, interacts with ZHD11/HB29.

Functionally, heavy-metal-binding protein. This Arabidopsis thaliana (Mouse-ear cress) protein is Heavy metal-associated isoprenylated plant protein 24.